A 176-amino-acid chain; its full sequence is Flavodoxin 1 (176 aa).

The Flavodoxin-like domain occupies 4 to 165; sequence TGIFFGSDTG…RVEKWVKQIS (162 aa).

This sequence belongs to the flavodoxin family. Requires FMN as cofactor.

Functionally, low-potential electron donor to a number of redox enzymes (Potential). Involved in the reactivation of inactive cob(II)alamin in methionine synthase. The sequence is that of Flavodoxin 1 (fldA) from Escherichia coli O157:H7.